Consider the following 1969-residue polypeptide: Protein mono-ADP-ribosyltransferase PARP4 (1969 aa).

The 94-residue stretch at 1 to 94 folds into the BRCT domain; sequence MTLGIFANCI…RLLDVRNYDP (94 aa). The Nuclear localization signal signature appears at 19 to 25; sequence PRQQKKK. A disordered region spans residues 92–132; it reads YDPLSPAPAAPPAERSRSEVQSEYLPSDNTPEKENTEVTEV. A PARP alpha-helical domain is found at 235–363; it reads SEKLQALLLE…ETNLSKPNPP (129 aa). A PARP catalytic domain is found at 362–566; the sequence is PPSLAKYRAL…FCTPGDQIKE (205 aa). The VIT domain occupies 600-728; sequence TNIKAGLQDA…KVLIKITYIT (129 aa). Residues 869 to 1039 enclose the VWFA domain; sequence EVIICLDCSS…KQIEAQMTRI (171 aa). S1229 is modified (phosphoserine). The short motif at 1230–1242 is the Nuclear localization signal element; the sequence is DGHGVLQPVSVSS. Composition is skewed to pro residues over residues 1372–1387, 1402–1417, 1425–1444, 1485–1513, and 1521–1540; these read PPHP…PLPL, HPPP…PPPS, LPPP…PPIP, and LPPP…PPPS. The tract at residues 1372–1608 is disordered; the sequence is PPHPLGGTHP…AGTQFSLSPI (237 aa). The FH1 domain maps to 1443–1541; sequence IPGGTLIPPS…HIPPPPPIPG (99 aa). A compositionally biased stretch (low complexity) spans 1541 to 1556; that stretch reads GGTLIPSPSSLFGGTH. Residues 1557–1585 show a composition bias toward pro residues; it reads LPPPPLLPAGTHIPPPPPITGSTHPPPPS. Residues 1808–1969 form an interaction with the major vault protein region; that stretch reads FCDEDQESPV…LHRILYYSQG (162 aa).

It belongs to the ARTD/PARP family. Component of the vault ribonucleoprotein particle, at least composed of MVP, PARP4 and one or more vault RNAs (vRNAs). Interacts with TEP1.

It is found in the cytoplasm. The protein localises to the nucleus. The enzyme catalyses L-aspartyl-[protein] + NAD(+) = 4-O-(ADP-D-ribosyl)-L-aspartyl-[protein] + nicotinamide. It catalyses the reaction L-glutamyl-[protein] + NAD(+) = 5-O-(ADP-D-ribosyl)-L-glutamyl-[protein] + nicotinamide. Mono-ADP-ribosyltransferase that mediates mono-ADP-ribosylation of target proteins. In Mus musculus (Mouse), this protein is Protein mono-ADP-ribosyltransferase PARP4.